Reading from the N-terminus, the 351-residue chain is Ca(2+)/H(+) antiporter ChaA (351 aa).

11 consecutive transmembrane segments (helical) span residues 4–24 (IFFILVAAGVPLSVIGSLMHW), 25–45 (PSAVLFAVYCVTIIALASYMG), 59–79 (IGGLLNATFGNAVELIISLFA), 86–106 (GIVLASLTGSVLGNLLLVAGL), 130–150 (GLLIFAIIVAFVIPEVFSVGM), 156–176 (LNLSIGISIIMILLYVAALYF), 205–225 (VATIVLFAATIVVAYISENLV), 241–261 (FIGVIIVAIVGNAAEHASAII), 282–302 (IAMFVAPVLVICSIFFPTSMP), 303–323 (LVFTLPELVAMVSAVLLMIAI), and 331–351 (WFEGATLLAAYVIMAIGFFLL).

This sequence belongs to the Ca(2+):cation antiporter (CaCA) (TC 2.A.19) family. Cation/proton exchanger (CAX) subfamily. Homotrimer.

The protein resides in the cell membrane. Its activity is regulated as follows. Calcium efflux is tightly regulated by intracellular pH. Its function is as follows. Ca(+)/H(+) antiporter that extrudes calcium in exchange for external protons. Does not transport sodium or potassium. This chain is Ca(2+)/H(+) antiporter ChaA (chaA), found in Bacillus subtilis (strain 168).